We begin with the raw amino-acid sequence, 115 residues long: Holo-[acyl-carrier-protein] synthase (115 aa).

Mg(2+)-binding residues include Asp-8 and Glu-56.

The protein belongs to the P-Pant transferase superfamily. AcpS family. Mg(2+) is required as a cofactor.

Its subcellular location is the cytoplasm. The enzyme catalyses apo-[ACP] + CoA = holo-[ACP] + adenosine 3',5'-bisphosphate + H(+). Transfers the 4'-phosphopantetheine moiety from coenzyme A to a Ser of acyl-carrier-protein. The protein is Holo-[acyl-carrier-protein] synthase of Ureaplasma parvum serovar 3 (strain ATCC 27815 / 27 / NCTC 11736).